The chain runs to 317 residues: MANALAQLKSFTTIVADTGDIEAIKRYQPEDATTNPSLILKASQIPEYAFLIENAIEWAKTQSHSIEQQIEDAGDKLAVNIGVEILKLVPGRISTEVDARLSFDKQRSIDKAHKLIKLYKDAGIDKSRILIKLASTWEGICAAKELEQEGINCNLTLLFSFAQARACAEAGVYLISPFVGRILDWYKKDTGQDYTAETDPGVVSVTEIYNYYKQNGYNTVVMGASFRNIGEIIELAGCDRLTIGPALLEELANTDVEIIQKLVATPATQSAPAALTEEQFRWVFNEDPMAVDKLAEGIRNFAIDQGKLEVMLKTKLS.

The active-site Schiff-base intermediate with substrate is Lys132.

This sequence belongs to the transaldolase family. Type 1 subfamily. In terms of assembly, homodimer.

The protein localises to the cytoplasm. It catalyses the reaction D-sedoheptulose 7-phosphate + D-glyceraldehyde 3-phosphate = D-erythrose 4-phosphate + beta-D-fructose 6-phosphate. It functions in the pathway carbohydrate degradation; pentose phosphate pathway; D-glyceraldehyde 3-phosphate and beta-D-fructose 6-phosphate from D-ribose 5-phosphate and D-xylulose 5-phosphate (non-oxidative stage): step 2/3. In terms of biological role, transaldolase is important for the balance of metabolites in the pentose-phosphate pathway. The polypeptide is Transaldolase (Shewanella frigidimarina (strain NCIMB 400)).